Consider the following 415-residue polypeptide: Putative competence-damage inducible protein (415 aa).

The protein belongs to the CinA family.

The sequence is that of Putative competence-damage inducible protein from Listeria welshimeri serovar 6b (strain ATCC 35897 / DSM 20650 / CCUG 15529 / CIP 8149 / NCTC 11857 / SLCC 5334 / V8).